The following is a 65-amino-acid chain: Double gene block protein 1 (65 aa).

Residues 1-41 (MDSQRTVELTNPRGRSKERGDSGGKQKNSMGRKIANDAISE) are disordered. The span at 15 to 24 (RSKERGDSGG) shows a compositional bias: basic and acidic residues. The segment at 17–43 (KERGDSGGKQKNSMGRKIANDAISESK) is RNA-binding.

Belongs to the carmovirus double gene block protein 1 family. In terms of assembly, homodimer.

In terms of biological role, cell-to-cell movement. Displays RNA-binding activity. The chain is Double gene block protein 1 from Melon necrotic spot virus (MNSV).